The following is a 366-amino-acid chain: MERITVNLAERSYPISIGAGLFEDPAYLSQILSNKNANQKVVVISNVTVAPLYAEKILSQLEQLGCDASLLELPDGEQYKSLDTFNQVMNFLLEGSYARDVVIIALGGGVIGDLVGFASACYQRGVDFIQIPTTLLSQVDSSVGGKTAVNHPLGKNMIGAFYQPKAVIIDTNCLSTLPEREFAAGIAEVIKYGIIYDGAFFDWLEENLDRLYALDEEALTYAIARCCEIKAEVVAQDEKESGIRALLNLGHTFGHAIEAELGYGNWLHGEAVSSGTVMAAKTSHLRGLISQEQLDRIINIMRSAKLPVHTPDTMSFDDFMTHMMRDKKVLSGQLRLVLPTGIGSAEVIADTPQDIIKQAIDFGRDI.

Residues 75 to 80 (DGEQYK), 109 to 113 (GVIGD), 133 to 134 (TT), Lys146, Lys155, and 173 to 176 (CLST) contribute to the NAD(+) site. Residues Glu188, His251, and His268 each contribute to the Zn(2+) site.

It belongs to the sugar phosphate cyclases superfamily. Dehydroquinate synthase family. Requires Co(2+) as cofactor. It depends on Zn(2+) as a cofactor. NAD(+) is required as a cofactor.

It is found in the cytoplasm. It catalyses the reaction 7-phospho-2-dehydro-3-deoxy-D-arabino-heptonate = 3-dehydroquinate + phosphate. It functions in the pathway metabolic intermediate biosynthesis; chorismate biosynthesis; chorismate from D-erythrose 4-phosphate and phosphoenolpyruvate: step 2/7. Its function is as follows. Catalyzes the conversion of 3-deoxy-D-arabino-heptulosonate 7-phosphate (DAHP) to dehydroquinate (DHQ). In Vibrio campbellii (strain ATCC BAA-1116), this protein is 3-dehydroquinate synthase.